Here is a 91-residue protein sequence, read N- to C-terminus: Small membrane A-kinase anchor protein (91 aa).

Residue Gly-2 is the site of N-myristoyl glycine attachment.

It belongs to the small membrane AKAP family. May be palmitoylated at Cys-3.

Its subcellular location is the cell membrane. Its function is as follows. Binds to type I regulatory subunits of protein kinase A and may anchor/target them to the plasma membrane. The protein is Small membrane A-kinase anchor protein of Xenopus laevis (African clawed frog).